The sequence spans 461 residues: ATP synthase subunit beta (461 aa).

An ATP-binding site is contributed by 149–156 (GGAGVGKT).

It belongs to the ATPase alpha/beta chains family. F-type ATPases have 2 components, CF(1) - the catalytic core - and CF(0) - the membrane proton channel. CF(1) has five subunits: alpha(3), beta(3), gamma(1), delta(1), epsilon(1). CF(0) has three main subunits: a(1), b(2) and c(9-12). The alpha and beta chains form an alternating ring which encloses part of the gamma chain. CF(1) is attached to CF(0) by a central stalk formed by the gamma and epsilon chains, while a peripheral stalk is formed by the delta and b chains.

The protein localises to the cell membrane. The catalysed reaction is ATP + H2O + 4 H(+)(in) = ADP + phosphate + 5 H(+)(out). Functionally, produces ATP from ADP in the presence of a proton gradient across the membrane. The catalytic sites are hosted primarily by the beta subunits. This chain is ATP synthase subunit beta, found in Caldanaerobacter subterraneus subsp. tengcongensis (strain DSM 15242 / JCM 11007 / NBRC 100824 / MB4) (Thermoanaerobacter tengcongensis).